Reading from the N-terminus, the 471-residue chain is Siroheme synthase 1 (471 aa).

Positions 1–203 (MEYLPLFAQL…GDTRAAEAVL (203 aa)) are precorrin-2 dehydrogenase /sirohydrochlorin ferrochelatase. NAD(+)-binding positions include 22–23 (EV) and 43–44 (KK). At S128 the chain carries Phosphoserine. Residues 215 to 471 (GEIILVGAGP…NLRSSVVNLA (257 aa)) are uroporphyrinogen-III C-methyltransferase. S-adenosyl-L-methionine is bound at residue P224. The Proton acceptor role is filled by D247. Residue K269 is the Proton donor of the active site. Residues 300-302 (GGD), I305, 330-331 (TA), M382, and G411 contribute to the S-adenosyl-L-methionine site.

The protein in the N-terminal section; belongs to the precorrin-2 dehydrogenase / sirohydrochlorin ferrochelatase family. It in the C-terminal section; belongs to the precorrin methyltransferase family.

The catalysed reaction is uroporphyrinogen III + 2 S-adenosyl-L-methionine = precorrin-2 + 2 S-adenosyl-L-homocysteine + H(+). The enzyme catalyses precorrin-2 + NAD(+) = sirohydrochlorin + NADH + 2 H(+). It catalyses the reaction siroheme + 2 H(+) = sirohydrochlorin + Fe(2+). It functions in the pathway cofactor biosynthesis; adenosylcobalamin biosynthesis; precorrin-2 from uroporphyrinogen III: step 1/1. It participates in cofactor biosynthesis; adenosylcobalamin biosynthesis; sirohydrochlorin from precorrin-2: step 1/1. The protein operates within porphyrin-containing compound metabolism; siroheme biosynthesis; precorrin-2 from uroporphyrinogen III: step 1/1. Its pathway is porphyrin-containing compound metabolism; siroheme biosynthesis; siroheme from sirohydrochlorin: step 1/1. It functions in the pathway porphyrin-containing compound metabolism; siroheme biosynthesis; sirohydrochlorin from precorrin-2: step 1/1. Multifunctional enzyme that catalyzes the SAM-dependent methylations of uroporphyrinogen III at position C-2 and C-7 to form precorrin-2 via precorrin-1. Then it catalyzes the NAD-dependent ring dehydrogenation of precorrin-2 to yield sirohydrochlorin. Finally, it catalyzes the ferrochelation of sirohydrochlorin to yield siroheme. The protein is Siroheme synthase 1 of Cronobacter sakazakii (strain ATCC BAA-894) (Enterobacter sakazakii).